The chain runs to 124 residues: Large ribosomal subunit protein bL12 (124 aa).

This sequence belongs to the bacterial ribosomal protein bL12 family. Homodimer. Part of the ribosomal stalk of the 50S ribosomal subunit. Forms a multimeric L10(L12)X complex, where L10 forms an elongated spine to which 2 to 4 L12 dimers bind in a sequential fashion. Binds GTP-bound translation factors.

In terms of biological role, forms part of the ribosomal stalk which helps the ribosome interact with GTP-bound translation factors. Is thus essential for accurate translation. The protein is Large ribosomal subunit protein bL12 of Burkholderia thailandensis (strain ATCC 700388 / DSM 13276 / CCUG 48851 / CIP 106301 / E264).